Here is a 428-residue protein sequence, read N- to C-terminus: Patatin-like protein 3 (428 aa).

The PNPLA domain maps to 38–252 (LSIDGGGIRG…AANNPTLCAI (215 aa)). The short motif at 42–47 (GGGIRG) is the GXGXXG element. Positions 80 to 84 (GTSTG) match the GXSXG motif. The active-site Nucleophile is the S82. D239 acts as the Proton acceptor in catalysis. The DGA/G motif lies at 239–241 (DGG). S423 is subject to Phosphoserine.

It belongs to the patatin family. Expressed specifically in the stigma, ovary and funiculus of the ovary.

It localises to the cytoplasm. In terms of biological role, possesses non-specific lipolytic acyl hydrolase (LAH) activity. Catalyzes the hydrolysis of the neutral lipids monogalactosyldiacylglycerol (MGDG), digalactosyldiacylglycerol (DGDG) and phosphatidylglycerol (PG), and less efficiently the polar lipids phosphatidylcholine (PC) and phosphatidylinositol (PI), but not the storage lipid triacylglycerol (TAG). May play a role in root development. The polypeptide is Patatin-like protein 3 (PLP3) (Arabidopsis thaliana (Mouse-ear cress)).